The primary structure comprises 199 residues: uncharacterized protein (199 aa).

A helical transmembrane segment spans residues 7-27 (FWFWLILGIIALFIIVKAIVI).

It belongs to the band 7/mec-2 family.

It localises to the membrane. This is an uncharacterized protein from Methanocaldococcus jannaschii (strain ATCC 43067 / DSM 2661 / JAL-1 / JCM 10045 / NBRC 100440) (Methanococcus jannaschii).